A 222-amino-acid chain; its full sequence is Small ribosomal subunit protein eS1 (222 aa).

Belongs to the eukaryotic ribosomal protein eS1 family.

The sequence is that of Small ribosomal subunit protein eS1 from Methanocaldococcus jannaschii (strain ATCC 43067 / DSM 2661 / JAL-1 / JCM 10045 / NBRC 100440) (Methanococcus jannaschii).